The primary structure comprises 215 residues: Peptide methionine sulfoxide reductase MsrA (215 aa).

The active site involves C57.

This sequence belongs to the MsrA Met sulfoxide reductase family.

The catalysed reaction is L-methionyl-[protein] + [thioredoxin]-disulfide + H2O = L-methionyl-(S)-S-oxide-[protein] + [thioredoxin]-dithiol. The enzyme catalyses [thioredoxin]-disulfide + L-methionine + H2O = L-methionine (S)-S-oxide + [thioredoxin]-dithiol. Has an important function as a repair enzyme for proteins that have been inactivated by oxidation. Catalyzes the reversible oxidation-reduction of methionine sulfoxide in proteins to methionine. This chain is Peptide methionine sulfoxide reductase MsrA, found in Saccharophagus degradans (strain 2-40 / ATCC 43961 / DSM 17024).